Reading from the N-terminus, the 398-residue chain is 1-deoxy-D-xylulose 5-phosphate reductoisomerase (398 aa).

NADPH-binding residues include T11, G12, S13, I14, and N125. Position 126 (K126) interacts with 1-deoxy-D-xylulose 5-phosphate. E127 contributes to the NADPH binding site. D151 is a binding site for Mn(2+). 1-deoxy-D-xylulose 5-phosphate-binding residues include S152, E153, S186, and H209. E153 lines the Mn(2+) pocket. G215 contributes to the NADPH binding site. The 1-deoxy-D-xylulose 5-phosphate site is built by S222, N227, K228, and E231. Residue E231 participates in Mn(2+) binding.

The protein belongs to the DXR family. The cofactor is Mg(2+). It depends on Mn(2+) as a cofactor.

It catalyses the reaction 2-C-methyl-D-erythritol 4-phosphate + NADP(+) = 1-deoxy-D-xylulose 5-phosphate + NADPH + H(+). The protein operates within isoprenoid biosynthesis; isopentenyl diphosphate biosynthesis via DXP pathway; isopentenyl diphosphate from 1-deoxy-D-xylulose 5-phosphate: step 1/6. Catalyzes the NADPH-dependent rearrangement and reduction of 1-deoxy-D-xylulose-5-phosphate (DXP) to 2-C-methyl-D-erythritol 4-phosphate (MEP). This is 1-deoxy-D-xylulose 5-phosphate reductoisomerase from Acinetobacter baylyi (strain ATCC 33305 / BD413 / ADP1).